The chain runs to 954 residues: Glycine dehydrogenase (decarboxylating) (954 aa).

Lys704 is subject to N6-(pyridoxal phosphate)lysine.

Belongs to the GcvP family. The glycine cleavage system is composed of four proteins: P, T, L and H. Pyridoxal 5'-phosphate serves as cofactor.

The enzyme catalyses N(6)-[(R)-lipoyl]-L-lysyl-[glycine-cleavage complex H protein] + glycine + H(+) = N(6)-[(R)-S(8)-aminomethyldihydrolipoyl]-L-lysyl-[glycine-cleavage complex H protein] + CO2. In terms of biological role, the glycine cleavage system catalyzes the degradation of glycine. The P protein binds the alpha-amino group of glycine through its pyridoxal phosphate cofactor; CO(2) is released and the remaining methylamine moiety is then transferred to the lipoamide cofactor of the H protein. The sequence is that of Glycine dehydrogenase (decarboxylating) from Rhizobium meliloti (strain 1021) (Ensifer meliloti).